We begin with the raw amino-acid sequence, 245 residues long: E3 ubiquitin-protein ligase RNF138 (245 aa).

Residue alanine 2 is modified to N-acetylalanine. The RING-type zinc finger occupies 18 to 58 (CPVCQEVLKTPVRTTACQHVFCRKCFLTAMRESGAHCPLCR). Cysteine 86, cysteine 89, histidine 101, and cysteine 105 together coordinate Zn(2+). A C2HC RNF-type zinc finger spans residues 86–105 (CRCCAKQIKFYRMRHHYKSC). The tract at residues 125–154 (QDSVGNSNRSETSTSDNTETYQENTSSSGH) is disordered. Threonine 142 carries the post-translational modification Phosphothreonine. 2 C2H2-type zinc fingers span residues 157 to 180 (FKCP…NSNH) and 187 to 215 (VTCP…NQRH). One can recognise a UIM domain in the interval 225–243 (LQLDEETQYQTAVEESFQV).

Interacts with NLK. Interacts with XRCC5/Ku80. Interacts with RBBP8/CtIP. Auto-ubiquitinated.

It localises to the chromosome. It catalyses the reaction S-ubiquitinyl-[E2 ubiquitin-conjugating enzyme]-L-cysteine + [acceptor protein]-L-lysine = [E2 ubiquitin-conjugating enzyme]-L-cysteine + N(6)-ubiquitinyl-[acceptor protein]-L-lysine.. It participates in protein modification; protein ubiquitination. Its function is as follows. E3 ubiquitin-protein ligase involved in DNA damage response by promoting DNA resection and homologous recombination. Recruited to sites of double-strand breaks following DNA damage and specifically promotes double-strand break repair via homologous recombination. Two different, non-exclusive, mechanisms have been proposed. According to a report, regulates the choice of double-strand break repair by favoring homologous recombination over non-homologous end joining (NHEJ): acts by mediating ubiquitination of XRCC5/Ku80, leading to remove the Ku complex from DNA breaks, thereby promoting homologous recombination. According to another report, cooperates with UBE2Ds E2 ubiquitin ligases (UBE2D1, UBE2D2, UBE2D3 or UBE2D4) to promote homologous recombination by mediating ubiquitination of RBBP8/CtIP. Together with NLK, involved in the ubiquitination and degradation of TCF/LEF. Also exhibits auto-ubiquitination activity in combination with UBE2K. May act as a negative regulator in the Wnt/beta-catenin-mediated signaling pathway. This Homo sapiens (Human) protein is E3 ubiquitin-protein ligase RNF138.